The primary structure comprises 105 residues: SAGA-associated factor 11 (105 aa).

Residues Phe76–Cys97 form an SGF11-type zinc finger.

This sequence belongs to the SGF11 family. In terms of assembly, component of the 1.8 MDa SAGA transcription coactivator-HAT complex. SAGA is built of 5 distinct domains with specialized functions. Within the SAGA complex, SUS1, SGF11, SGF73 and UBP8 form an additional subcomplex of SAGA called the DUB module (deubiquitination module). Interacts directly with SGF73, SUS1 and UBP8.

It is found in the nucleus. Its function is as follows. Functions as a component of the transcription regulatory histone acetylation (HAT) complex SAGA. At the promoters, SAGA is required for recruitment of the basal transcription machinery. It influences RNA polymerase II transcriptional activity through different activities such as TBP interaction and promoter selectivity, interaction with transcription activators, and chromatin modification through histone acetylation and deubiquitination. SAGA acetylates nucleosomal histone H3 to some extent (to form H3K9ac, H3K14ac, H3K18ac and H3K23ac). SAGA interacts with DNA via upstream activating sequences (UASs). Involved in transcriptional regulation of a subset of SAGA-regulated genes. Within the SAGA complex, participates in a subcomplex, that specifically deubiquitinates histones H2B. The sequence is that of SAGA-associated factor 11 from Eremothecium gossypii (strain ATCC 10895 / CBS 109.51 / FGSC 9923 / NRRL Y-1056) (Yeast).